The chain runs to 505 residues: Phosphomevalonate kinase, peroxisomal (505 aa).

Ala2 bears the N-acetylalanine mark. Residues Asp57–Leu65 carry the Peroxisomal targeting signal PTS2 motif. Val177–Ala187 contacts ATP.

It belongs to the GHMP kinase family. Mevalonate kinase subfamily.

The protein localises to the peroxisome. It carries out the reaction (R)-5-phosphomevalonate + ATP = (R)-5-diphosphomevalonate + ADP. It participates in isoprenoid biosynthesis; isopentenyl diphosphate biosynthesis via mevalonate pathway; isopentenyl diphosphate from (R)-mevalonate: step 2/3. This is Phosphomevalonate kinase, peroxisomal from Arabidopsis thaliana (Mouse-ear cress).